Here is a 369-residue protein sequence, read N- to C-terminus: MSQSVVVNPRPALKAKLTKEPFSIPNLKPYYKAWPTAVNPDYPGLKVALEARIKNLYPPKKAAKLIQDDYALLSSMWWPRATADRLQTCTFWFLWLFTWDDEIDQSTSDLFIHIHKANDFRKESLEYVKFCLGVGDDETAKWDFQNNPPNRPLIRSLDVIGAHLQKVYNHDQIMTFVNEIDYYMGCQQREQKRKLTGRLPIVAEYLETRMGTSAVTSMLALNEFADGNDIPRDIMTDPKMISLWYEVNMNMSLSNDLLSLRKEIKHGDIDSMVPVLVSARGLTVRQAVKETEAEINRNIERFDQIADALLEEIKLTHPEKVDEVASYIVGCRYNQMANFLWSLTTTRYGLGDMVRDAEGRIPIVIENVN.

Mg(2+)-binding residues include Asp100, Asn248, Ser252, and Asp256. A DDXXD motif motif is present at residues 100–104 (DDEID). Positions 255 to 262 (NDLLSLRK) match the (N,D)D(L,I,V)X(S,T)XXXE motif motif.

This sequence belongs to the terpene synthase family. Mg(2+) is required as a cofactor.

In terms of biological role, sesquiterpene cyclase; part of the gene cluster that mediates the biosynthesis of heptelidic acid (HA), a sesquiterpene lactone that acts as an inhibitor of glyceraldehyde-3-phosphatedehydrogenase (GAPDH) and a growth inhibitor of the salt-tolerant lactic acid bacteria in soy sauce brewing. The sequence is that of Sesquiterpene cyclase hepA from Aspergillus oryzae (strain ATCC 42149 / RIB 40) (Yellow koji mold).